Here is a 252-residue protein sequence, read N- to C-terminus: UPF0246 protein FP0718 (252 aa).

This sequence belongs to the UPF0246 family.

The polypeptide is UPF0246 protein FP0718 (Flavobacterium psychrophilum (strain ATCC 49511 / DSM 21280 / CIP 103535 / JIP02/86)).